A 314-amino-acid chain; its full sequence is Quinolinate synthase (314 aa).

The iminosuccinate site is built by His-27 and Ser-44. Residue Cys-89 participates in [4Fe-4S] cluster binding. Residues 115–117 (YIN) and Ser-132 contribute to the iminosuccinate site. Position 175 (Cys-175) interacts with [4Fe-4S] cluster. Iminosuccinate-binding positions include 201 to 203 (HPE) and Thr-218. Cys-271 contacts [4Fe-4S] cluster.

This sequence belongs to the quinolinate synthase family. Type 2 subfamily. The cofactor is [4Fe-4S] cluster.

Its subcellular location is the cytoplasm. The catalysed reaction is iminosuccinate + dihydroxyacetone phosphate = quinolinate + phosphate + 2 H2O + H(+). It functions in the pathway cofactor biosynthesis; NAD(+) biosynthesis; quinolinate from iminoaspartate: step 1/1. Its function is as follows. Catalyzes the condensation of iminoaspartate with dihydroxyacetone phosphate to form quinolinate. The protein is Quinolinate synthase of Ehrlichia chaffeensis (strain ATCC CRL-10679 / Arkansas).